Here is a 73-residue protein sequence, read N- to C-terminus: Large ribosomal subunit protein bL31 (73 aa).

4 residues coordinate Zn(2+): cysteine 16, cysteine 18, cysteine 37, and cysteine 40.

The protein belongs to the bacterial ribosomal protein bL31 family. Type A subfamily. In terms of assembly, part of the 50S ribosomal subunit. The cofactor is Zn(2+).

Its function is as follows. Binds the 23S rRNA. In Pseudomonas fluorescens (strain ATCC BAA-477 / NRRL B-23932 / Pf-5), this protein is Large ribosomal subunit protein bL31.